The following is a 192-amino-acid chain: Shikimate kinase (192 aa).

15–20 (GAGKTT) is an ATP binding site. Thr-19 provides a ligand contact to Mg(2+). Substrate contacts are provided by Asp-37, Arg-61, and Gly-83. Residue Arg-121 participates in ATP binding. Arg-140 is a substrate binding site.

Belongs to the shikimate kinase family. As to quaternary structure, monomer. The cofactor is Mg(2+).

Its subcellular location is the cytoplasm. It catalyses the reaction shikimate + ATP = 3-phosphoshikimate + ADP + H(+). It functions in the pathway metabolic intermediate biosynthesis; chorismate biosynthesis; chorismate from D-erythrose 4-phosphate and phosphoenolpyruvate: step 5/7. In terms of biological role, catalyzes the specific phosphorylation of the 3-hydroxyl group of shikimic acid using ATP as a cosubstrate. The polypeptide is Shikimate kinase (Cupriavidus pinatubonensis (strain JMP 134 / LMG 1197) (Cupriavidus necator (strain JMP 134))).